A 144-amino-acid chain; its full sequence is Large ribosomal subunit protein uL16 (144 aa).

The span at 1 to 16 (MLIPKRVKYRKQHRPR) shows a compositional bias: basic residues. Positions 1 to 25 (MLIPKRVKYRKQHRPRGNGGVSKGG) are disordered.

This sequence belongs to the universal ribosomal protein uL16 family. In terms of assembly, part of the 50S ribosomal subunit.

Binds 23S rRNA and is also seen to make contacts with the A and possibly P site tRNAs. This is Large ribosomal subunit protein uL16 from Desulforamulus reducens (strain ATCC BAA-1160 / DSM 100696 / MI-1) (Desulfotomaculum reducens).